A 333-amino-acid chain; its full sequence is Taste receptor type 2 member 38 (333 aa).

At 1–17 (MLTLTRIRTVSYEVRST) the chain is on the extracellular side. The helical transmembrane segment at 18–38 (FLFISVLEFAVGFLTNAFVFL) threads the bilayer. Topologically, residues 39 to 55 (VNFWDVVKRQPLSNSDC) are cytoplasmic. A helical transmembrane segment spans residues 56–76 (VLLCLSISRLFLHGLLFLSAI). At 77–94 (QLTHFQKLSEPLNHSYQA) the chain is on the extracellular side. Residues 95-115 (IIMLWMIANQANLWLAACLSL) traverse the membrane as a helical segment. The Cytoplasmic portion of the chain corresponds to 116–142 (LYCSKLIRFSHTFLICLASWVSRKISQ). The chain crosses the membrane as a helical span at residues 143–163 (MLLGIILCSCICTVLCVWCFF). Residues 164–190 (SRPHFTVTTVLFMNNNTRLNWQIKDLN) are Extracellular-facing. Asn178 is a glycosylation site (N-linked (GlcNAc...) asparagine). Residues 191 to 211 (LFYSFLFCYLWSVPPFLLFLV) traverse the membrane as a helical segment. The Cytoplasmic portion of the chain corresponds to 212-251 (SSGMLTVSLGRHMRTMKVYIRDSRDPSLEAHIKALKSLVS). Residues 252 to 272 (FFCFFVISSCAAFISVPLLIL) traverse the membrane as a helical segment. The Extracellular portion of the chain corresponds to 273 to 276 (WRDK). A helical membrane pass occupies residues 277–297 (IGVMVCVGIMAACPSGHAAVL). The Cytoplasmic portion of the chain corresponds to 298–333 (ISGNAKLRRAVTTILLWAQSSLKVRADHKADSRTPC).

Belongs to the G-protein coupled receptor T2R family.

The protein resides in the membrane. Receptor that may play a role in the perception of bitterness and is gustducin-linked. May play a role in sensing the chemical composition of the gastrointestinal content. The activity of this receptor may stimulate alpha gustducin, mediate PLC-beta-2 activation and lead to the gating of TRPM5. This Gorilla gorilla gorilla (Western lowland gorilla) protein is Taste receptor type 2 member 38 (TAS2R38).